A 509-amino-acid polypeptide reads, in one-letter code: Probable basic-leucine zipper transcription factor H (509 aa).

Residues M1–S42 form a disordered region. The span at S10 to F39 shows a compositional bias: low complexity. The bZIP domain maps to A50–L113. A basic motif region spans residues K51–K77. Residues L78–L99 are leucine-zipper. Disordered regions lie at residues L134–G185, F223–N275, I290–N414, and S465–K509. 6 stretches are compositionally biased toward low complexity: residues L226–P248, P255–N269, N292–S350, Q361–N414, S465–S483, and N490–K509.

This sequence belongs to the bZIP family.

The protein resides in the nucleus. Functionally, probable transcriptional regulator. This is Probable basic-leucine zipper transcription factor H (bzpH) from Dictyostelium discoideum (Social amoeba).